We begin with the raw amino-acid sequence, 413 residues long: Serine hydroxymethyltransferase (413 aa).

(6S)-5,6,7,8-tetrahydrofolate contacts are provided by residues L119 and 123-125 (GHL). At K228 the chain carries N6-(pyridoxal phosphate)lysine.

It belongs to the SHMT family. Homodimer. The cofactor is pyridoxal 5'-phosphate.

It is found in the cytoplasm. The catalysed reaction is (6R)-5,10-methylene-5,6,7,8-tetrahydrofolate + glycine + H2O = (6S)-5,6,7,8-tetrahydrofolate + L-serine. Its pathway is one-carbon metabolism; tetrahydrofolate interconversion. It functions in the pathway amino-acid biosynthesis; glycine biosynthesis; glycine from L-serine: step 1/1. In terms of biological role, catalyzes the reversible interconversion of serine and glycine with tetrahydrofolate (THF) serving as the one-carbon carrier. This reaction serves as the major source of one-carbon groups required for the biosynthesis of purines, thymidylate, methionine, and other important biomolecules. Also exhibits THF-independent aldolase activity toward beta-hydroxyamino acids, producing glycine and aldehydes, via a retro-aldol mechanism. This is Serine hydroxymethyltransferase from Desulfatibacillum aliphaticivorans.